Reading from the N-terminus, the 811-residue chain is G-type lectin S-receptor-like serine/threonine-protein kinase LECRK3 (811 aa).

The first 23 residues, 1-23, serve as a signal peptide directing secretion; sequence MAHLLFLPILQLLLLYCTKSAQA. The Bulb-type lectin domain maps to 24 to 153; that stretch reads QLNISIGSSL…DGATKWESFG (130 aa). Residues 24–464 lie on the Extracellular side of the membrane; sequence QLNISIGSSL…DKKYWILGSS (441 aa). 7 N-linked (GlcNAc...) asparagine glycosylation sites follow: asparagine 26, asparagine 39, asparagine 59, asparagine 219, asparagine 226, asparagine 237, and asparagine 242. The 53-residue stretch at 292–344 folds into the EGF-like; atypical domain; the sequence is PENICQSIQTMVGSGACGFNSYCTIDGTKNTTSCLCPQNYKFIDDKRKYKGCR. 5 cysteine pairs are disulfide-bonded: cysteine 296-cysteine 314, cysteine 308-cysteine 325, cysteine 327-cysteine 343, cysteine 389-cysteine 411, and cysteine 393-cysteine 399. Asparagine 321 carries an N-linked (GlcNAc...) asparagine glycan. In terms of domain architecture, PAN spans 352 to 430; sequence CDLDETTAML…GKMDVNVPRT (79 aa). Residues 465-485 form a helical membrane-spanning segment; the sequence is LLFGSSVLVNFLLISVMLFGT. At 486 to 811 the chain is on the cytoplasmic side; it reads YCSITSRKKI…DPSSYISSLA (326 aa). The Protein kinase domain maps to 521-795; that stretch reads GGFQEVLGTG…KVTQMLDGAV (275 aa). Residues 527-535 and lysine 551 contribute to the ATP site; that span reads LGTGASGVV. Residue aspartate 645 is the Proton acceptor of the active site.

The protein belongs to the protein kinase superfamily. Ser/Thr protein kinase family.

It is found in the membrane. It catalyses the reaction L-seryl-[protein] + ATP = O-phospho-L-seryl-[protein] + ADP + H(+). The enzyme catalyses L-threonyl-[protein] + ATP = O-phospho-L-threonyl-[protein] + ADP + H(+). In terms of biological role, involved in resistance against the herbivorous insect brown planthopper (N.lugens, BPH). Member of the BPH3 (BPH resistance locus 3) cluster which contains LECRK1, LECRK2 and LECRK3. This chain is G-type lectin S-receptor-like serine/threonine-protein kinase LECRK3, found in Oryza sativa subsp. indica (Rice).